The chain runs to 443 residues: NADH-quinone oxidoreductase subunit D 1 (443 aa).

The protein belongs to the complex I 49 kDa subunit family. In terms of assembly, NDH-1 is composed of 14 different subunits. Subunits NuoB, C, D, E, F, and G constitute the peripheral sector of the complex.

Its subcellular location is the cell membrane. The catalysed reaction is a quinone + NADH + 5 H(+)(in) = a quinol + NAD(+) + 4 H(+)(out). Functionally, NDH-1 shuttles electrons from NADH, via FMN and iron-sulfur (Fe-S) centers, to quinones in the respiratory chain. The immediate electron acceptor for the enzyme in this species is believed to be a menaquinone. Couples the redox reaction to proton translocation (for every two electrons transferred, four hydrogen ions are translocated across the cytoplasmic membrane), and thus conserves the redox energy in a proton gradient. In Streptomyces avermitilis (strain ATCC 31267 / DSM 46492 / JCM 5070 / NBRC 14893 / NCIMB 12804 / NRRL 8165 / MA-4680), this protein is NADH-quinone oxidoreductase subunit D 1.